Reading from the N-terminus, the 161-residue chain is Allophycocyanin beta chain (161 aa).

Residue Asn71 is modified to N4-methylasparagine. Position 81 (Cys81) interacts with (2R,3E)-phycocyanobilin.

The protein belongs to the phycobiliprotein family. Heterodimer of an alpha and a beta chain. In terms of processing, contains one covalently linked phycocyanobilin chromophore.

The protein resides in the plastid. The protein localises to the chloroplast thylakoid membrane. Light-harvesting photosynthetic bile pigment-protein from the phycobiliprotein complex. Allophycocyanin has a maximum absorption at approximately 650 nanometers. The protein is Allophycocyanin beta chain (apcB) of Aglaothamnion neglectum (Red alga).